The following is an 81-amino-acid chain: RNA-binding protein Hfq (81 aa).

The Sm domain occupies 9–68 (DPFLNVLRRERVPVFIYLINGIKLQGEIESFDKFVILLRNTVNQMIYKHAISTIVPSRVV).

Belongs to the Hfq family. As to quaternary structure, homohexamer.

Its function is as follows. RNA chaperone that binds small regulatory RNA (sRNAs) and mRNAs to facilitate mRNA translational regulation in response to envelope stress, environmental stress and changes in metabolite concentrations. Also binds with high specificity to tRNAs. The polypeptide is RNA-binding protein Hfq (Blochmanniella pennsylvanica (strain BPEN)).